The following is a 318-amino-acid chain: Deoxyhypusine hydroxylase (318 aa).

HEAT-like PBS-type repeat units follow at residues Leu70–Asn96 and Val103–Glu129. Fe cation is bound by residues His72, Glu73, His105, Glu106, His231, Glu232, His264, and Glu265. The stretch at Val262–Asp288 is one HEAT-like PBS-type 3 repeat.

It belongs to the deoxyhypusine hydroxylase family. Fe(2+) is required as a cofactor.

It localises to the cytoplasm. The protein resides in the nucleus. It carries out the reaction [eIF5A protein]-deoxyhypusine + AH2 + O2 = [eIF5A protein]-hypusine + A + H2O. It participates in protein modification; eIF5A hypusination. Functionally, catalyzes the hydroxylation of the N(6)-(4-aminobutyl)-L-lysine intermediate to form hypusine, an essential post-translational modification only found in mature eIF-5A factor. This Candida albicans (strain SC5314 / ATCC MYA-2876) (Yeast) protein is Deoxyhypusine hydroxylase.